Here is a 260-residue protein sequence, read N- to C-terminus: CD40 ligand (260 aa).

Over 1 to 22 the chain is Cytoplasmic; that stretch reads MIETYSQPSPRSVATGLPASMK. A helical; Signal-anchor for type II membrane protein transmembrane segment spans residues 23–46; the sequence is IFMYLLTVFLITQMIGSVLFAVYL. The Extracellular portion of the chain corresponds to 47-260; that stretch reads HRRLDKVEEE…GFSSFGLLKL (214 aa). Positions 121–260 constitute a THD domain; that stretch reads IAAHVVSEAN…GFSSFGLLKL (140 aa). Cysteines 177 and 217 form a disulfide. Asn-239 carries N-linked (GlcNAc...) asparagine glycosylation.

Belongs to the tumor necrosis factor family. Homotrimer. Interacts with CD28. CD40 ligand, soluble form: Exists as either a monomer or a homotrimer. Forms a ternary complex between CD40 and integrins for CD40-CD40LG signaling. In terms of processing, the soluble form derives from the membrane form by proteolytic processing. As to expression, specifically expressed on activated CD4+ T-lymphocytes.

Its subcellular location is the cell membrane. It localises to the cell surface. The protein localises to the secreted. Functionally, cytokine that acts as a ligand to CD40/TNFRSF5. Costimulates T-cell proliferation and cytokine production. Its cross-linking on T-cells generates a costimulatory signal which enhances the production of IL4 and IL10 in conjunction with the TCR/CD3 ligation and CD28 costimulation. Induces the activation of NF-kappa-B. Induces the activation of kinases MAPK8 and PAK2 in T-cells. Mediates B-cell proliferation in the absence of co-stimulus as well as IgE production in the presence of IL4. Involved in immunoglobulin class switching. In terms of biological role, acts as a ligand for integrins, specifically ITGA5:ITGB1 and ITGAV:ITGB3; both integrins and the CD40 receptor are required for activation of CD40-CD40LG signaling, which have cell-type dependent effects, such as B-cell activation, NF-kappa-B signaling and anti-apoptotic signaling. In Mus musculus (Mouse), this protein is CD40 ligand (Cd40lg).